A 431-amino-acid polypeptide reads, in one-letter code: Isocitrate lyase (431 aa).

A disordered region spans residues 1 to 21; it reads MSNVGTPRTAQEIQQDWDTNP. Residue 93–95 participates in substrate binding; sequence SGW. Asp155 is a binding site for Mg(2+). Catalysis depends on Cys193, which acts as the Proton acceptor. Residues 194–195, Arg230, 315–319, and Thr349 contribute to the substrate site; these read GH and NCSPS.

This sequence belongs to the isocitrate lyase/PEP mutase superfamily. Isocitrate lyase family. As to quaternary structure, homotetramer. It depends on Mg(2+) as a cofactor.

It catalyses the reaction D-threo-isocitrate = glyoxylate + succinate. The protein operates within carbohydrate metabolism; glyoxylate cycle; (S)-malate from isocitrate: step 1/2. In terms of biological role, involved in the metabolic adaptation in response to environmental changes. Catalyzes the reversible formation of succinate and glyoxylate from isocitrate, a key step of the glyoxylate cycle, which operates as an anaplerotic route for replenishing the tricarboxylic acid cycle during growth on fatty acid substrates. The chain is Isocitrate lyase (aceA) from Corynebacterium efficiens (strain DSM 44549 / YS-314 / AJ 12310 / JCM 11189 / NBRC 100395).